Consider the following 120-residue polypeptide: Protein crumbs homolog 3 (120 aa).

The N-terminal stretch at 1–26 is a signal peptide; sequence MANPGLGLLLALGLPFLLARWGRAWG. Residues 27-59 lie on the Extracellular side of the membrane; the sequence is QIQTTSANENSTVLPSSTSSSSDGNLRPEAITA. N-linked (GlcNAc...) asparagine glycosylation occurs at Asn-36. Residues 60–80 traverse the membrane as a helical segment; that stretch reads IIVVFSLLAALLLAVGLALLV. Residues 81–120 lie on the Cytoplasmic side of the membrane; that stretch reads RKLREKRQTEGTYRPSSEEQVGARVPPTPNLKLPPEERLI. The tract at residues 84–120 is interaction with EPB41L5; the sequence is REKRQTEGTYRPSSEEQVGARVPPTPNLKLPPEERLI. The segment at 87 to 120 is disordered; it reads RQTEGTYRPSSEEQVGARVPPTPNLKLPPEERLI. Positions 90–99 are enriched in polar residues; it reads EGTYRPSSEE. A PDZ-binding motif is present at residues 117 to 120; that stretch reads ERLI.

Component of a complex composed of CRB3, PALS1 and PATJ. Interacts (via C-terminus) with PALS1 (via PDZ domain). Interacts with PARD6A. Interacts (via intracellular domain) with EPB41L5. Interacts with WDR83. Preferentially expressed in epithelial tissues. Expressed at high levels in lung, kidney, and colon. Expressed at high levels in retina, colon and mammary glands. Moderately expressed in liver, spleen, pancreas and prostate. Moderately to weakly expressed in the placenta. Weakly expressed in skeletal muscle and small intestine.

The protein resides in the apical cell membrane. Its subcellular location is the cell junction. The protein localises to the tight junction. In terms of biological role, involved in the establishment of cell polarity in mammalian epithelial cells. Regulates the morphogenesis of tight junctions. Involved in promoting phosphorylation and cytoplasmic retention of transcriptional coactivators YAP1 and WWTR1/TAZ which leads to suppression of TGFB1-dependent transcription of target genes such as CCN2/CTGF, SERPINE1/PAI1, SNAI1/SNAIL1 and SMAD7. This is Protein crumbs homolog 3 from Homo sapiens (Human).